The following is a 95-amino-acid chain: Co-chaperonin GroES (95 aa).

Belongs to the GroES chaperonin family. In terms of assembly, heptamer of 7 subunits arranged in a ring. Interacts with the chaperonin GroEL.

The protein localises to the cytoplasm. In terms of biological role, together with the chaperonin GroEL, plays an essential role in assisting protein folding. The GroEL-GroES system forms a nano-cage that allows encapsulation of the non-native substrate proteins and provides a physical environment optimized to promote and accelerate protein folding. GroES binds to the apical surface of the GroEL ring, thereby capping the opening of the GroEL channel. This Zymomonas mobilis subsp. mobilis (strain ATCC 31821 / ZM4 / CP4) protein is Co-chaperonin GroES.